Reading from the N-terminus, the 101-residue chain is Ubiquitin-related modifier 1 homolog (101 aa).

1-thioglycine is present on glycine 101. Glycine 101 participates in a covalent cross-link: Glycyl lysine isopeptide (Gly-Lys) (interchain with K-? in acceptor proteins).

This sequence belongs to the URM1 family. In terms of assembly, interacts with cer. C-terminal thiocarboxylation occurs in 2 steps, it is first acyl-adenylated (-COAMP) via the hesA/moeB/thiF part of the MOCS3 homolog, then thiocarboxylated (-COSH) via the rhodanese domain of the MOCS3 homolog.

It is found in the cytoplasm. Its pathway is tRNA modification; 5-methoxycarbonylmethyl-2-thiouridine-tRNA biosynthesis. Acts as a sulfur carrier required for 2-thiolation of mcm(5)S(2)U at tRNA wobble positions of cytosolic tRNA(Lys), tRNA(Glu) and tRNA(Gln). Serves as sulfur donor in tRNA 2-thiolation reaction by being thiocarboxylated (-COSH) at its C-terminus by MOCS3. The sulfur is then transferred to tRNA to form 2-thiolation of mcm(5)S(2)U. Also acts as a ubiquitin-like protein (UBL) that is covalently conjugated via an isopeptide bond to lysine residues of target proteins such as Prx2/Jafrac1, Ciao1, Eip71CD and GILT1. The thiocarboxylated form serves as substrate for conjugation and oxidative stress specifically induces the formation of UBL-protein conjugates. This Drosophila ananassae (Fruit fly) protein is Ubiquitin-related modifier 1 homolog.